The chain runs to 382 residues: S-adenosylmethionine synthase (382 aa).

His16 lines the ATP pocket. Asp18 serves as a coordination point for Mg(2+). A K(+)-binding site is contributed by Glu44. Glu57 and Gln100 together coordinate L-methionine. The tract at residues 100–110 (QSADIAMGVDE) is flexible loop. Residues 165–167 (DAK), Asp240, 246–247 (RK), Ala263, and Lys267 each bind ATP. Asp240 is an L-methionine binding site. Position 271 (Lys271) interacts with L-methionine.

The protein belongs to the AdoMet synthase family. In terms of assembly, homotetramer; dimer of dimers. The cofactor is Mg(2+). K(+) is required as a cofactor.

Its subcellular location is the cytoplasm. The enzyme catalyses L-methionine + ATP + H2O = S-adenosyl-L-methionine + phosphate + diphosphate. It participates in amino-acid biosynthesis; S-adenosyl-L-methionine biosynthesis; S-adenosyl-L-methionine from L-methionine: step 1/1. Catalyzes the formation of S-adenosylmethionine (AdoMet) from methionine and ATP. The overall synthetic reaction is composed of two sequential steps, AdoMet formation and the subsequent tripolyphosphate hydrolysis which occurs prior to release of AdoMet from the enzyme. This is S-adenosylmethionine synthase from Saccharophagus degradans (strain 2-40 / ATCC 43961 / DSM 17024).